The primary structure comprises 1059 residues: MPVSMAVCETANVVNAALRESLGGNSSAGSSTDQAKSGEDTNGSLQNHIVANAKRILMAKIEYEEVPNYHESVLENLKSKYIVIKPGNPGAINGFSGKNNTGKLVGANGHDNNGARKQAEHPNNQSHHNHPHPTSNPNELPKPKRVLYPRENIRIGWKQSERKWQVGTGMINVGNTCYLNSTLQALLHIPALANWLVSEQAHLADCNVAEPGSGCIICAMAKTLLATQSNQSAVRPFLIYSKLKQICKHMVVGRQEDAHEFLRFLVEAMERAYLMRFRNYKELDQLVKETTPLGQIFGGYLRSEVRCLSCNHVSITFQHFQDLLLDIRKADSLEDAFEGHFSRERLEDMGYKCEGCKKKLKRFSMIGNKLTKQISFKPRIDLSKYAARSPAAQAQPLTYRLVSMVTHLGASQHCGHYTAIGSTDTGSFYNFDDSYVRPITMQNVCNTNAYIMFFELDLSQAASPPANRPNGVRLTNGHSTTPVPAATVSSPSPTRFIGPQLPPGGANGYTNGNAQKTAIQFKQQNQQNGLQLGTGKFQDTAKPPLVGAYAKGEATSAPTANGNKSSSPSSNSSSNHKSINQQQYLPISSDDEDIDDEMKPGPTTAQLPSMPNMTEDNTEPKAKSPVKIHLKTPVKTPLKSLVPYESASEEEEAPLPNPRQSPGGEDFSESDQESGQTNGHSKTNGSLTNGSASSSVHVNNSKQKTDAIDEIFKSLKKSADSEEDDDEEEPSIQLTNGWHPQKQSQSQSKAPPSPKTPPSPAVIKSKTGIWKVTRKDEVDAIDDDDDAVVVEGAPVKIPTPNKTHRNPFSSSKPSTDSPATPGAKRQKLLNGSALKSHQQPRVGNGYQSNVTSNGSTVNELLKQSYRGYGASVLSWNGKPAELEKEPFELVCAKRIAGHGSVEGSDIVEGSVAVDAAVTSSSNSNDVVVIAVALLVDAREQRQRDLDDDEENEMDRGRQRKVKSGSAKGNNASNSTPGYNPFQEYEGQKRWNKNGGGGGFSRFYNQNYRQNFQQRNKFKFNRFGGAGSAKFQQQRALQRHLSAGGGFSRRQPSAQQQQQT.

Disordered regions lie at residues 22 to 45 (LGGN…NGSL) and 102 to 145 (GKLV…KPKR). Positions 23–45 (GGNSSAGSSTDQAKSGEDTNGSL) are enriched in polar residues. Positions 121–138 (HPNNQSHHNHPHPTSNPN) are enriched in low complexity. The 290-residue stretch at 168–457 (TGMINVGNTC…NAYIMFFELD (290 aa)) folds into the USP domain. C177 acts as the Nucleophile in catalysis. Residue H416 is the Proton acceptor of the active site. 4 disordered regions span residues 464–512 (PPAN…YTNG), 554–853 (ATSA…VTSN), 941–1005 (RQRD…FYNQ), and 1022–1059 (FGGA…QQQT). Low complexity-rich tracts occupy residues 479-494 (STTP…PSPT) and 561-580 (NGNK…KSIN). S490 and S492 each carry phosphoserine. Over residues 603 to 615 (TTAQLPSMPNMTE) the composition is skewed to polar residues. 2 positions are modified to phosphothreonine: T632 and T636. Phosphoserine is present on residues S646 and S648. Positions 673–702 (ESGQTNGHSKTNGSLTNGSASSSVHVNNSK) are enriched in polar residues. The span at 703 to 720 (QKTDAIDEIFKSLKKSAD) shows a compositional bias: basic and acidic residues. S721 carries the phosphoserine modification. The span at 721–730 (SEEDDDEEEP) shows a compositional bias: acidic residues. Over residues 740 to 750 (PQKQSQSQSKA) the composition is skewed to low complexity. A compositionally biased stretch (pro residues) spans 751–760 (PPSPKTPPSP). S753 is modified (phosphoserine). A Phosphothreonine modification is found at T756. S759 is modified (phosphoserine). The segment covering 779-788 (DAIDDDDDAV) has biased composition (acidic residues). At T799 the chain carries Phosphothreonine. Residues 806 to 818 (NPFSSSKPSTDSP) show a composition bias toward polar residues. At S817 the chain carries Phosphoserine. A Phosphothreonine modification is found at T820. The span at 833–853 (ALKSHQQPRVGNGYQSNVTSN) shows a compositional bias: polar residues. Over residues 963–974 (SGSAKGNNASNS) the composition is skewed to low complexity.

The protein belongs to the peptidase C19 family. Interacts with atms/PAF1, but not with CycT.

Its subcellular location is the nucleus. The protein resides in the nucleolus. It carries out the reaction Thiol-dependent hydrolysis of ester, thioester, amide, peptide and isopeptide bonds formed by the C-terminal Gly of ubiquitin (a 76-residue protein attached to proteins as an intracellular targeting signal).. Functionally, required for maintaining multiple types of adult stem cells, including male and female germline, epithelial follicle cell and intestinal stem cells. May function as a transcriptional repressor by continually deubiquiting histone H2B at the promoters of genes critical for cellular differentiation, thereby preventing histone H3 'Lys-4' trimethylation (H3K4). Controls selective autophagy activation by ubiquitinated proteins. The polypeptide is Ubiquitin carboxyl-terminal hydrolase 36 (Usp36) (Drosophila sechellia (Fruit fly)).